Consider the following 288-residue polypeptide: 2-hydroxy-6-oxononadienedioate/2-hydroxy-6-oxononatrienedioate hydrolase (288 aa).

Residue His-267 is the Proton acceptor of the active site.

This sequence belongs to the AB hydrolase superfamily. MhpC family. Homodimer.

The enzyme catalyses (2Z,4E)-2-hydroxy-6-oxonona-2,4-dienedioate + H2O = (2Z)-2-hydroxypenta-2,4-dienoate + succinate + H(+). The catalysed reaction is (2Z,4E,7E)-2-hydroxy-6-oxonona-2,4,7-trienedioate + H2O = (2Z)-2-hydroxypenta-2,4-dienoate + fumarate + H(+). It functions in the pathway aromatic compound metabolism; 3-phenylpropanoate degradation. Its function is as follows. Catalyzes the cleavage of the C5-C6 bond of 2-hydroxy-6-oxononadienedioate and 2-hydroxy-6-oxononatrienedioate, a dienol ring fission product of the bacterial meta-cleavage pathway for degradation of phenylpropionic acid. In Escherichia coli (strain K12 / DH10B), this protein is 2-hydroxy-6-oxononadienedioate/2-hydroxy-6-oxononatrienedioate hydrolase.